A 172-amino-acid chain; its full sequence is Co-chaperone protein HscB (172 aa).

The J domain occupies 2–74 (DYFTLFGLPI…LKRAEYMLSL (73 aa)).

It belongs to the HscB family. In terms of assembly, interacts with HscA and stimulates its ATPase activity. Interacts with IscU.

In terms of biological role, co-chaperone involved in the maturation of iron-sulfur cluster-containing proteins. Seems to help targeting proteins to be folded toward HscA. The sequence is that of Co-chaperone protein HscB from Pectobacterium carotovorum subsp. carotovorum (strain PC1).